Reading from the N-terminus, the 176-residue chain is Probable RNA-binding protein EIF1AD (176 aa).

Residues 5–89 (TKKRYITNKV…VKGEIEYILD (85 aa)) form the S1-like domain. The segment covering 117 to 128 (AKRGKANDKMID) has biased composition (basic and acidic residues). The interval 117 to 176 (AKRGKANDKMIDDDMLPPSESEEEDDESEDEIEDTYDEDEETDDEEFDTYNPNRMQAPSK) is disordered. Over residues 129 to 164 (DDMLPPSESEEEDDESEDEIEDTYDEDEETDDEEFD) the composition is skewed to acidic residues. Over residues 166–176 (YNPNRMQAPSK) the composition is skewed to polar residues.

It belongs to the EIF1AD family.

The sequence is that of Probable RNA-binding protein EIF1AD from Caenorhabditis briggsae.